The sequence spans 226 residues: 2-C-methyl-D-erythritol 4-phosphate cytidylyltransferase (226 aa).

The protein belongs to the IspD/TarI cytidylyltransferase family. IspD subfamily.

The catalysed reaction is 2-C-methyl-D-erythritol 4-phosphate + CTP + H(+) = 4-CDP-2-C-methyl-D-erythritol + diphosphate. It participates in isoprenoid biosynthesis; isopentenyl diphosphate biosynthesis via DXP pathway; isopentenyl diphosphate from 1-deoxy-D-xylulose 5-phosphate: step 2/6. Functionally, catalyzes the formation of 4-diphosphocytidyl-2-C-methyl-D-erythritol from CTP and 2-C-methyl-D-erythritol 4-phosphate (MEP). The sequence is that of 2-C-methyl-D-erythritol 4-phosphate cytidylyltransferase from Synechococcus sp. (strain CC9902).